A 224-amino-acid polypeptide reads, in one-letter code: Ethylene-inducing xylanase 5 (224 aa).

Residues 1-16 (MLKSLVVLLLTSRVIA) form the signal peptide. A GH11 domain is found at 32–218 (QATPNSQGTH…SSGFAEMTVA (187 aa)). An N-linked (GlcNAc...) asparagine glycan is attached at N88. The Nucleophile role is filled by E117. Catalysis depends on E205, which acts as the Proton donor.

The protein belongs to the glycosyl hydrolase 11 (cellulase G) family.

The catalysed reaction is Endohydrolysis of (1-&gt;4)-beta-D-xylosidic linkages in xylans.. It participates in glycan degradation; xylan degradation. Its function is as follows. Endo-1,4-beta-xylanase involved in the hydrolysis of xylan, a major structural heterogeneous polysaccharide found in plant biomass representing the second most abundant polysaccharide in the biosphere, after cellulose. May act as an elicitor of plant defense responses in certain plants but does not exhibit any cell death when transiently expressed in N.benthamiana. This Verticillium dahliae (strain VdLs.17 / ATCC MYA-4575 / FGSC 10137) (Verticillium wilt) protein is Ethylene-inducing xylanase 5.